The following is a 262-amino-acid chain: UPF0739 protein C1orf74 homolog (262 aa).

The protein belongs to the UPF0739 family.

The sequence is that of UPF0739 protein C1orf74 homolog from Xenopus laevis (African clawed frog).